The primary structure comprises 546 residues: Thermosome subunit beta (546 aa).

It belongs to the TCP-1 chaperonin family. In terms of assembly, forms a Heterooligomeric complex of two stacked eight-membered rings.

Functionally, molecular chaperone; binds unfolded polypeptides in vitro, and has a weak ATPase activity. This is Thermosome subunit beta (thsB) from Thermococcus kodakarensis (strain ATCC BAA-918 / JCM 12380 / KOD1) (Pyrococcus kodakaraensis (strain KOD1)).